Here is a 286-residue protein sequence, read N- to C-terminus: 33 kDa chaperonin (286 aa).

2 cysteine pairs are disulfide-bonded: cysteine 225/cysteine 227 and cysteine 258/cysteine 261.

Belongs to the HSP33 family. Under oxidizing conditions two disulfide bonds are formed involving the reactive cysteines. Under reducing conditions zinc is bound to the reactive cysteines and the protein is inactive.

It localises to the cytoplasm. Redox regulated molecular chaperone. Protects both thermally unfolding and oxidatively damaged proteins from irreversible aggregation. Plays an important role in the bacterial defense system toward oxidative stress. The protein is 33 kDa chaperonin of Shewanella sp. (strain ANA-3).